Here is a 106-residue protein sequence, read N- to C-terminus: Cell division topological specificity factor (106 aa).

The protein belongs to the MinE family.

Its function is as follows. Prevents the cell division inhibition by proteins MinC and MinD at internal division sites while permitting inhibition at polar sites. This ensures cell division at the proper site by restricting the formation of a division septum at the midpoint of the long axis of the cell. The chain is Cell division topological specificity factor from Prochlorococcus marinus (strain SARG / CCMP1375 / SS120).